Consider the following 275-residue polypeptide: Large ribosomal subunit protein uL2 (275 aa).

The tract at residues 222-275 (GVAMNPVDHPMGGGEGRSSGGRHPCSPWGMPTKGYKTRKNKTTDKFIVRKRNKR) is disordered.

This sequence belongs to the universal ribosomal protein uL2 family. In terms of assembly, part of the 50S ribosomal subunit. Forms a bridge to the 30S subunit in the 70S ribosome.

Functionally, one of the primary rRNA binding proteins. Required for association of the 30S and 50S subunits to form the 70S ribosome, for tRNA binding and peptide bond formation. It has been suggested to have peptidyltransferase activity; this is somewhat controversial. Makes several contacts with the 16S rRNA in the 70S ribosome. In Desulfatibacillum aliphaticivorans, this protein is Large ribosomal subunit protein uL2.